The sequence spans 803 residues: Bromodomain-containing protein 2 (803 aa).

N-acetylmethionine is present on methionine 1. Threonine 6 bears the Phosphothreonine mark. Serine 37 carries the post-translational modification Phosphoserine. The disordered stretch occupies residues 53-73 (ALQLTPANPPPPEVSNPKKPG). The Bromo 1 domain maps to 74–180 (RVTNQLQYLH…KIFLQKVASM (107 aa)). A protein-binding residues include aspartate 112, tyrosine 155, asparagine 156, lysine 157, aspartate 160, and aspartate 161. Disordered stretches follow at residues 268–348 (PPAQ…KLSE), 456–652 (EPLE…KRQL), and 739–803 (EKRL…SDSG). Residues 285–298 (TTTPTPTAILAPGS) show a composition bias toward low complexity. Phosphoserine occurs at positions 298 and 301. The span at 316 to 332 (VRRESGRPIKPPRKDLP) shows a compositional bias: basic and acidic residues. Positions 344-453 (GKLSEQLKHC…DVFEFRYAKM (110 aa)) constitute a Bromo 2 domain. The segment covering 481 to 515 (SSEESSSESSSEEEEEEDEDEEEEEEESESSDSEE) has biased composition (acidic residues). Residues 545–567 (KPKRKREKKEKKKKRKAEKHRGR) are compositionally biased toward basic residues. Positions 556 to 560 (KKKRK) match the Nuclear localization signal motif. The segment covering 623–632 (KTAPPALPAG) has biased composition (low complexity). One can recognise an NET domain in the interval 634–716 (DSEEEEESRP…SCLRKKPRKP (83 aa)). Serine 635 is subject to Phosphoserine. Basic and acidic residues predominate over residues 641 to 652 (SRPMSYDEKRQL). A compositionally biased stretch (low complexity) spans 777 to 797 (SASSSSSDSSSSSSSSSSSDT).

This sequence belongs to the BET family. Homodimer. Interacts with E2F1. Interacts with (acetylated) STAT3; promoting STAT3 recruitment to chromatin. Interacts with CTCF; promoting BRD2 recruitment to chromatin.

The protein resides in the nucleus. The protein localises to the chromosome. In terms of biological role, chromatin reader protein that specifically recognizes and binds histone H4 acetylated at 'Lys-5' and 'Lys-12' (H4K5ac and H4K12ac, respectively), thereby controlling gene expression and remodeling chromatin structures. Recruits transcription factors and coactivators to target gene sites, and activates RNA polymerase II machinery for transcriptional elongation. Plays a key role in genome compartmentalization via its association with CTCF and cohesin: recruited to chromatin by CTCF and promotes formation of topologically associating domains (TADs) via its ability to bind acetylated histones, contributing to CTCF boundary formation and enhancer insulation. Also recognizes and binds acetylated non-histone proteins, such as STAT3. Involved in inflammatory response by regulating differentiation of naive CD4(+) T-cells into T-helper Th17: recognizes and binds STAT3 acetylated at 'Lys-87', promoting STAT3 recruitment to chromatin. In addition to acetylated lysines, also recognizes and binds lysine residues on histones that are both methylated and acetylated on the same side chain to form N6-acetyl-N6-methyllysine (Kacme), an epigenetic mark of active chromatin associated with increased transcriptional initiation. Specifically binds histone H4 acetyl-methylated at 'Lys-5' and 'Lys-12' (H4K5acme and H4K12acme, respectively). The polypeptide is Bromodomain-containing protein 2 (BRD2) (Bos taurus (Bovine)).